Here is a 325-residue protein sequence, read N- to C-terminus: Beta-ketoacyl-[acyl-carrier-protein] synthase III (325 aa).

Active-site residues include Cys112 and His250. Residues 251–255 form an ACP-binding region; it reads QANSR. The active site involves Asn280.

It belongs to the thiolase-like superfamily. FabH family. Homodimer.

Its subcellular location is the cytoplasm. The enzyme catalyses malonyl-[ACP] + acetyl-CoA + H(+) = 3-oxobutanoyl-[ACP] + CO2 + CoA. It participates in lipid metabolism; fatty acid biosynthesis. Its function is as follows. Catalyzes the condensation reaction of fatty acid synthesis by the addition to an acyl acceptor of two carbons from malonyl-ACP. Catalyzes the first condensation reaction which initiates fatty acid synthesis and may therefore play a role in governing the total rate of fatty acid production. Possesses both acetoacetyl-ACP synthase and acetyl transacylase activities. Its substrate specificity determines the biosynthesis of branched-chain and/or straight-chain of fatty acids. In Lactococcus lactis subsp. lactis (strain IL1403) (Streptococcus lactis), this protein is Beta-ketoacyl-[acyl-carrier-protein] synthase III.